A 417-amino-acid chain; its full sequence is NADH-quinone oxidoreductase subunit D (417 aa).

Belongs to the complex I 49 kDa subunit family. As to quaternary structure, NDH-1 is composed of 14 different subunits. Subunits NuoB, C, D, E, F, and G constitute the peripheral sector of the complex.

The protein localises to the cell inner membrane. It carries out the reaction a quinone + NADH + 5 H(+)(in) = a quinol + NAD(+) + 4 H(+)(out). In terms of biological role, NDH-1 shuttles electrons from NADH, via FMN and iron-sulfur (Fe-S) centers, to quinones in the respiratory chain. The immediate electron acceptor for the enzyme in this species is believed to be ubiquinone. Couples the redox reaction to proton translocation (for every two electrons transferred, four hydrogen ions are translocated across the cytoplasmic membrane), and thus conserves the redox energy in a proton gradient. The protein is NADH-quinone oxidoreductase subunit D of Halorhodospira halophila (strain DSM 244 / SL1) (Ectothiorhodospira halophila (strain DSM 244 / SL1)).